The sequence spans 101 residues: Small ribosomal subunit protein uS14 (101 aa).

It belongs to the universal ribosomal protein uS14 family. As to quaternary structure, part of the 30S ribosomal subunit. Contacts proteins S3 and S10.

Its function is as follows. Binds 16S rRNA, required for the assembly of 30S particles and may also be responsible for determining the conformation of the 16S rRNA at the A site. The polypeptide is Small ribosomal subunit protein uS14 (Pseudomonas putida (strain GB-1)).